The following is a 562-amino-acid chain: Beta-hexosaminidase (562 aa).

The N-terminal stretch at 1–22 (MVLDKMIIFHLLLWLCNVVVHA) is a signal peptide. Residues asparagine 38, asparagine 52, asparagine 111, asparagine 337, asparagine 382, asparagine 396, and asparagine 463 are each glycosylated (N-linked (GlcNAc...) asparagine).

The protein belongs to the glycosyl hydrolase 20 family.

It carries out the reaction Hydrolysis of terminal non-reducing N-acetyl-D-hexosamine residues in N-acetyl-beta-D-hexosaminides.. Functionally, has a broad substrate specificity. This Candida albicans (Yeast) protein is Beta-hexosaminidase (HEX1).